A 206-amino-acid polypeptide reads, in one-letter code: Ribosomal RNA large subunit methyltransferase E (206 aa).

S-adenosyl-L-methionine is bound by residues G60, W62, D80, D96, and D121. Catalysis depends on K161, which acts as the Proton acceptor.

Belongs to the class I-like SAM-binding methyltransferase superfamily. RNA methyltransferase RlmE family.

Its subcellular location is the cytoplasm. The enzyme catalyses uridine(2552) in 23S rRNA + S-adenosyl-L-methionine = 2'-O-methyluridine(2552) in 23S rRNA + S-adenosyl-L-homocysteine + H(+). In terms of biological role, specifically methylates the uridine in position 2552 of 23S rRNA at the 2'-O position of the ribose in the fully assembled 50S ribosomal subunit. The sequence is that of Ribosomal RNA large subunit methyltransferase E from Francisella tularensis subsp. tularensis (strain FSC 198).